The primary structure comprises 641 residues: Tetracycline resistance protein TetQ (641 aa).

A tr-type G domain is found at 1 to 244 (MNIINLGILA…AITSFILPPA (244 aa)). Residues 10-17 (AHIDAGKT), 74-78 (DTPGH), and 128-131 (NKID) each bind GTP.

Belongs to the TRAFAC class translation factor GTPase superfamily. Classic translation factor GTPase family. TetM/TetO subfamily.

Its function is as follows. Abolishes the inhibitory effect of tetracyclin on protein synthesis by a non-covalent modification of the ribosomes. This is Tetracycline resistance protein TetQ (tetQ) from Bacteroides thetaiotaomicron.